We begin with the raw amino-acid sequence, 899 residues long: MADESSSPATGDPNSQKPESTTPISIPNPNPNPSLTPPPPQQHSQPPVAPLVPPGPPYAPPAQIPSSLLPTNLPPPPPFRPGMQFTPVANFQNPSSGVPPPGSMPQYQPQPGMRPFQPMANGYPGIHGVAPPGAMPPHGLLRYPSPYPTMVRPGFIMRPPGTIGAVQLAPRPLIPGMPGLRPVMPPMVRPASLPFVTPAEKPQTTIYIGKIATVENDFMMSILEFCGHVKSCLRAEDPTTKKPKGFGFYEFESAEGILRAIRLLTQRTIDGQELLVNVNQATKEYLLKYVEKKIETAKKAKESQGTKENQAEGPESEQDKLESADNETGKDGESKIKENIDIANSAVLTDEEREADREAMEKIETAIEERLKSNPLPPPPPPPADGSGMEFAFKSKDGDSNTDVARSDAAANDVETSGEHNRPDTSSPDWSKRNDRRSRERGEKEQEMDRYEREAERERSRKEREQRRKLEDAERAYQTRLRQWERREREKEKERQYEKEKEKEKERKRKKEIRYEEEEEEDDDDSRRRWHRAALDERRRRQLREKEDDLADRLKEEEEVAEAKRSAEEQNLQQQQLDALRILSGQAAIGSETVQTSPIENDHKATLQTVGESANEHHAADFEENGSGNESMAIDNNSGSEAHAPSKKLGFGLVGSGKRTSVPSVFYEEDEDEARKAKKMKPLVPIDYSTEEQEAVAHGGSGNTPPHLALAAEFAKRISSTNPKEETIETEKQRSRRSHDKASHRDRERERERDRDRDRVRDRGDGHSGPTKDAKESGKAKIIDTKFLDAKQLIDTIPKTKEDLFSYEINWAMYDKHQVHERMRPWISKKIMEFLGEEEATLVDFIVSNTQQHVQASQMLELLQSILDEEAEMFVLKMWRMLIFEIKRVEAGVPVKSKA.

The segment covering 1–20 has biased composition (polar residues); sequence MADESSSPATGDPNSQKPES. Positions 1–112 are disordered; the sequence is MADESSSPAT…SMPQYQPQPG (112 aa). Residues 26–63 are compositionally biased toward pro residues; that stretch reads IPNPNPNPSLTPPPPQQHSQPPVAPLVPPGPPYAPPAQ. One can recognise an RRM domain in the interval 204–281; that stretch reads TTIYIGKIAT…QELLVNVNQA (78 aa). Disordered stretches follow at residues 298–572 and 611–778; these read KKAK…EQNL and GESA…KESG. Composition is skewed to basic and acidic residues over residues 317-340 and 354-372; these read EQDK…KENI and EADR…ERLK. The span at 375–384 shows a compositional bias: pro residues; sequence PLPPPPPPPA. Residues 430 to 505 show a composition bias toward basic and acidic residues; sequence WSKRNDRRSR…QYEKEKEKEK (76 aa). A coiled-coil region spans residues 434 to 578; it reads NDRRSRERGE…EQNLQQQQLD (145 aa). Residues 515–524 are compositionally biased toward acidic residues; that stretch reads YEEEEEEDDD. The Nuclear localization signal 1 motif lies at 526–533; it reads SRRRWHRA. Basic and acidic residues predominate over residues 533–568; it reads AALDERRRRQLREKEDDLADRLKEEEEVAEAKRSAE. Polar residues predominate over residues 626–640; it reads GSGNESMAIDNNSGS. Basic and acidic residues-rich tracts occupy residues 723-733 and 740-778; these read PKEETIETEKQ and DKAS…KESG. Residues 735-742 carry the Nuclear localization signal 2 motif; it reads SRRSHDKA. Residues 802–899 enclose the PWI domain; that stretch reads EDLFSYEINW…EAGVPVKSKA (98 aa).

As to quaternary structure, specifically associates with functional splicing complexes. Associates with exon junction complex (EJC) proteins. Phosphorylated; the phosphorylation level is repressed by abscisic acid (ABA).

The protein localises to the nucleus. In terms of biological role, RNA-binding protein that acts as a regulator of alternative pre-mRNA splicing. Negative regulator of responses to abscisic acid (ABA), including in early development. In Arabidopsis thaliana (Mouse-ear cress), this protein is RNA-binding motif protein 25.